Consider the following 1233-residue polypeptide: Protein Jumonji (1233 aa).

A compositionally biased stretch (basic residues) spans 1–10 (MSKERPKRNI). 6 disordered regions span residues 1–22 (MSKE…DGIP), 65–148 (NGQS…LSKR), 165–335 (PALP…VKYT), 355–379 (ETKL…ESSN), 423–451 (EGLR…MKGA), and 466–542 (KPLL…GWGM). Residues 84–96 (SQVSSTSNDISSS) show a composition bias toward low complexity. The Nuclear localization signal signature appears at 102 to 108 (PSRKRPR). Polar residues predominate over residues 115–127 (FAQSQPNSPSTTP). Positions 139–168 (ATQISDLSKRKPKTEDFLTFLCLRGSPALP) are sufficient for interaction with the PRC2 complex. Over residues 178 to 191 (QDDEDEEEEEEETE) the composition is skewed to acidic residues. Composition is skewed to polar residues over residues 195-208 (TATN…QSTP) and 216-228 (QVPN…GSSK). Over residues 229 to 262 (SLKEKEPAQKHKSKEATPGKEKNSEHKAESRKDQ) the composition is skewed to basic and acidic residues. Residues 268–285 (HPTTNTGSSTKGLTANNH) are compositionally biased toward polar residues. Residues 309 to 318 (SSPSANAASA) show a composition bias toward low complexity. Residues 365 to 379 (SPVNHTISGKLESSN) show a composition bias toward polar residues. 2 stretches are compositionally biased toward basic and acidic residues: residues 423-440 (EGLR…HIDK) and 473-485 (LKKE…LERN). The segment covering 506-519 (ENASCENRSTSQAE) has biased composition (polar residues). Residues 520-535 (SLHKPQDSMGKHEKGS) are compositionally biased toward basic and acidic residues. In terms of domain architecture, JmjN spans 546–587 (IPILRPSTKEFHDPLIYIESVRAQVEKYGMCRVIPPPDWRPE). In terms of domain architecture, ARID spans 610-702 (WGPNVQRLAC…YLLSYDSLSP (93 aa)). Residues 863-867 (GSGFP) carry the GSGFP motif motif. The region spanning 873-1037 (PFSRHGWNLT…MGFKTAKEMK (165 aa)) is the JmjC domain. Residues 1197–1233 (ENCISKPTPKRGPRKRATVDVPSSRLSSSSSSKSASS) form a disordered region. Positions 1219-1233 (SSRLSSSSSSKSASS) are enriched in low complexity.

This sequence belongs to the JARID2 family. In terms of assembly, associates with the PRC2 complex.

The protein localises to the nucleus. Functionally, regulator of histone methyltransferase complexes that plays an essential role in embryonic development, including heart and liver development, neural tube fusion process and hematopoiesis. Acts as an accessory subunit for the core PRC2 (Polycomb repressive complex 2) complex, which mediates histone H3K27 (H3K27me3) trimethylation on chromatin. Binds DNA and mediates the recruitment of the PRC2 complex to target genes in embryonic stem cells, thereby playing a key role in stem cell differentiation and normal embryonic development. In cardiac cells, it is required to repress expression of cyclin-D1 (CCND1) by activating methylation of 'Lys-9' of histone H3 (H3K9me) by the GLP1/EHMT1 and G9a/EHMT2 histone methyltransferases. Also acts as a transcriptional repressor of ANF via its interaction with GATA4 and NKX2-5. Participates in the negative regulation of cell proliferation signaling. Does not have histone demethylase activity. The protein is Protein Jumonji (JARID2) of Gallus gallus (Chicken).